A 255-amino-acid polypeptide reads, in one-letter code: Protein PH0439 (255 aa).

The protein belongs to the CinA family.

The sequence is that of Protein PH0439 from Pyrococcus horikoshii (strain ATCC 700860 / DSM 12428 / JCM 9974 / NBRC 100139 / OT-3).